Consider the following 300-residue polypeptide: Protoheme IX farnesyltransferase (300 aa).

9 helical membrane-spanning segments follow: residues 21 to 43 (PRVVELLLLTTVPTMILAQRGVP), 45 to 65 (PLSVLSVLLGGAMSAGAAGAF), 94 to 114 (ASLIFAWMLCVISVLWFLLFV), 117 to 137 (LSALLSAIAVFLYAFFYSIVL), 145 to 167 (IVWGGLAGCMPVLIAWAAVTGSI), 171 to 193 (AIVLFAVVFLWTPPHYWPLSIHY), 213 to 233 (LVVLQVLLYAFAVVACTLLLI), 235 to 255 (VAHMTPLYGLFSAVLGAWFVY), and 272 to 292 (AMHIFSLSNTYLSLVFLSVGI).

Belongs to the UbiA prenyltransferase family. Protoheme IX farnesyltransferase subfamily.

The protein localises to the cell membrane. It catalyses the reaction heme b + (2E,6E)-farnesyl diphosphate + H2O = Fe(II)-heme o + diphosphate. Its pathway is porphyrin-containing compound metabolism; heme O biosynthesis; heme O from protoheme: step 1/1. Converts heme B (protoheme IX) to heme O by substitution of the vinyl group on carbon 2 of heme B porphyrin ring with a hydroxyethyl farnesyl side group. The sequence is that of Protoheme IX farnesyltransferase from Tropheryma whipplei (strain TW08/27) (Whipple's bacillus).